Consider the following 117-residue polypeptide: Large ribosomal subunit protein bL20 (117 aa).

This sequence belongs to the bacterial ribosomal protein bL20 family.

Its function is as follows. Binds directly to 23S ribosomal RNA and is necessary for the in vitro assembly process of the 50S ribosomal subunit. It is not involved in the protein synthesizing functions of that subunit. This is Large ribosomal subunit protein bL20 from Vibrio atlanticus (strain LGP32) (Vibrio splendidus (strain Mel32)).